We begin with the raw amino-acid sequence, 235 residues long: Probable inactive serine protease 37 (235 aa).

An N-terminal signal peptide occupies residues 1-19; it reads MKFIFYLSVLTGTFLFADS. The 214-residue stretch at 20 to 233 folds into the Peptidase S1 domain; sequence SVQKEDPAPY…YVSWIENTAK (214 aa). 3 disulfide bridges follow: C40/C56, C131/C198, and C163/C177.

It belongs to the peptidase S1 family.

The protein resides in the cytoplasmic vesicle. Its subcellular location is the secretory vesicle. The protein localises to the acrosome. It is found in the secreted. In terms of biological role, plays a role in male fertility. May have a role in sperm migration or binding to zona-intact eggs. Involved in the activation of the proacrosin/acrosin system. The chain is Probable inactive serine protease 37 from Macaca fascicularis (Crab-eating macaque).